Consider the following 279-residue polypeptide: Tryptophan synthase alpha chain (279 aa).

Residues Glu-50 and Asp-61 each act as proton acceptor in the active site.

It belongs to the TrpA family. Tetramer of two alpha and two beta chains.

The catalysed reaction is (1S,2R)-1-C-(indol-3-yl)glycerol 3-phosphate + L-serine = D-glyceraldehyde 3-phosphate + L-tryptophan + H2O. It functions in the pathway amino-acid biosynthesis; L-tryptophan biosynthesis; L-tryptophan from chorismate: step 5/5. Its function is as follows. The alpha subunit is responsible for the aldol cleavage of indoleglycerol phosphate to indole and glyceraldehyde 3-phosphate. The polypeptide is Tryptophan synthase alpha chain (Brucella anthropi (strain ATCC 49188 / DSM 6882 / CCUG 24695 / JCM 21032 / LMG 3331 / NBRC 15819 / NCTC 12168 / Alc 37) (Ochrobactrum anthropi)).